Consider the following 206-residue polypeptide: Stage III sporulation protein AF (206 aa).

2 helical membrane-spanning segments follow: residues 1-21 and 34-54; these read MSFLTEWLTTIVLFILFAIVI and AKMVVSLLLIVVMLTPIFKLF.

It is found in the cell membrane. This is Stage III sporulation protein AF (spoIIIAF) from Bacillus subtilis (strain 168).